A 148-amino-acid chain; its full sequence is Lipoprotein MlpA (148 aa).

An N-terminal signal peptide occupies residues 1 to 17 (MKIINILFCLFLLLLNS). Residue C18 is the site of N-palmitoyl cysteine attachment. Residue C18 is the site of S-diacylglycerol cysteine attachment. The tract at residues 26–58 (LKNNAQQTKSRGKRDLTQKEATPEKPKSKEELL) is disordered. Residues 38–58 (KRDLTQKEATPEKPKSKEELL) are compositionally biased toward basic and acidic residues.

The protein belongs to the Multicopy lipoprotein (Mlp) family.

It is found in the cell outer membrane. In terms of biological role, an outer membrane protein that may participate in pathogenesis. Some human Lyme disease patients have antibodies against this protein. The Mlp proteins probably undergo intragenic recombination, generating new alleles. The protein is Lipoprotein MlpA (mlpA) of Borreliella burgdorferi (strain ATCC 35210 / DSM 4680 / CIP 102532 / B31) (Borrelia burgdorferi).